Consider the following 255-residue polypeptide: tRNA (guanine-N(7)-)-methyltransferase (255 aa).

The S-adenosyl-L-methionine site is built by E86, E111, D138, and D161. The active site involves D161. Residues K165, D197, and 234–237 (TKFE) each bind substrate.

This sequence belongs to the class I-like SAM-binding methyltransferase superfamily. TrmB family.

It catalyses the reaction guanosine(46) in tRNA + S-adenosyl-L-methionine = N(7)-methylguanosine(46) in tRNA + S-adenosyl-L-homocysteine. Its pathway is tRNA modification; N(7)-methylguanine-tRNA biosynthesis. In terms of biological role, catalyzes the formation of N(7)-methylguanine at position 46 (m7G46) in tRNA. The chain is tRNA (guanine-N(7)-)-methyltransferase from Pasteurella multocida (strain Pm70).